A 352-amino-acid polypeptide reads, in one-letter code: Probable protein phosphatase 2C 42 (352 aa).

The PPM-type phosphatase domain maps to 26 to 321 (AYASSAMQGY…DNMSVILVRF (296 aa)). The Mn(2+) site is built by Asp62, Gly63, Asp267, and Asp312. Positions 328 to 352 (RGARAATSSTSTGTVPSRHSKSISL) are disordered. The segment covering 329–341 (GARAATSSTSTGT) has biased composition (low complexity).

Belongs to the PP2C family. The cofactor is Mg(2+). Mn(2+) serves as cofactor.

The catalysed reaction is O-phospho-L-seryl-[protein] + H2O = L-seryl-[protein] + phosphate. It catalyses the reaction O-phospho-L-threonyl-[protein] + H2O = L-threonyl-[protein] + phosphate. This chain is Probable protein phosphatase 2C 42, found in Oryza sativa subsp. japonica (Rice).